The sequence spans 128 residues: Translation initiation factor 5A (128 aa).

Lys35 is modified (hypusine).

Belongs to the eIF-5A family.

The protein localises to the cytoplasm. In terms of biological role, functions by promoting the formation of the first peptide bond. This is Translation initiation factor 5A (eIF5A) from Methanocella arvoryzae (strain DSM 22066 / NBRC 105507 / MRE50).